A 446-amino-acid chain; its full sequence is Delta(8)-fatty-acid desaturase (446 aa).

Residues 5 to 89 (KKYISVGELE…LEDYLVSEIS (85 aa)) enclose the Cytochrome b5 heme-binding domain. Heme is bound by residues histidine 40 and histidine 63. 2 helical membrane passes run 112–132 (VIYC…GVLC) and 136–156 (LWVH…AAYL). The short motif at 158 to 162 (HDSGH) is the Histidine box-1 element. 4 helical membrane-spanning segments follow: residues 174-195 (FAQV…KWTH), 253-273 (IYLV…LLLF), 282-302 (ALNI…VSCL), and 309-329 (VLFV…FTLN). The Histidine box-2 signature appears at 195-199 (HNAHH). The Histidine box-3 motif lies at 372-376 (QLEHH).

Belongs to the fatty acid desaturase type 1 family. Fe cation serves as cofactor. Expressed only in young leaves.

The protein localises to the membrane. The enzyme catalyses an N-acyl-(4R)-4-hydroxysphinganine + 2 Fe(II)-[cytochrome b5] + O2 + 2 H(+) = a (4R,8E)-4-hydroxysphingenine ceramide + 2 Fe(III)-[cytochrome b5] + 2 H2O. It carries out the reaction an N-acyl-(4R)-4-hydroxysphinganine + 2 Fe(II)-[cytochrome b5] + O2 + 2 H(+) = a (4R,8Z)-4-hydroxysphing-8-enine ceramide + 2 Fe(III)-[cytochrome b5] + 2 H2O. Functionally, plays a major role as delta(8)-fatty-acid desaturase which introduces a double bond at the 8-position in the long-chain base (LCB) of ceramides with or without a hydroxy group at the 4-position. The enzyme produces both the 8E and 8Z isomers (in a 4:1 ratio). This structural modification contributes to the quantitative partitioning of ceramides between the two major sphingolipid classes, glucosylceramides and glycosylinositolphosphoryl ceramides. Sphingolipids are important membrane components involved in environmental stress responses, such as resistance to chilling, and act as cell signaling molecules. In Borago officinalis (Bourrache), this protein is Delta(8)-fatty-acid desaturase (sld1).